We begin with the raw amino-acid sequence, 728 residues long: 1,4-alpha-glucan branching enzyme GlgB (728 aa).

D405 serves as the catalytic Nucleophile. E458 acts as the Proton donor in catalysis.

It belongs to the glycosyl hydrolase 13 family. GlgB subfamily. In terms of assembly, monomer.

It catalyses the reaction Transfers a segment of a (1-&gt;4)-alpha-D-glucan chain to a primary hydroxy group in a similar glucan chain.. It participates in glycan biosynthesis; glycogen biosynthesis. Functionally, catalyzes the formation of the alpha-1,6-glucosidic linkages in glycogen by scission of a 1,4-alpha-linked oligosaccharide from growing alpha-1,4-glucan chains and the subsequent attachment of the oligosaccharide to the alpha-1,6 position. This Klebsiella pneumoniae subsp. pneumoniae (strain ATCC 700721 / MGH 78578) protein is 1,4-alpha-glucan branching enzyme GlgB.